A 400-amino-acid polypeptide reads, in one-letter code: 1-deoxy-D-xylulose 5-phosphate reductoisomerase (400 aa).

Threonine 17, glycine 18, serine 19, isoleucine 20, and asparagine 131 together coordinate NADPH. Residue lysine 132 participates in 1-deoxy-D-xylulose 5-phosphate binding. Glutamate 133 provides a ligand contact to NADPH. Aspartate 157 is a binding site for Mn(2+). Residues serine 158, glutamate 159, serine 188, and histidine 211 each contribute to the 1-deoxy-D-xylulose 5-phosphate site. Glutamate 159 serves as a coordination point for Mn(2+). Position 217 (glycine 217) interacts with NADPH. Residues serine 224, asparagine 229, lysine 230, and glutamate 233 each coordinate 1-deoxy-D-xylulose 5-phosphate. Glutamate 233 is a Mn(2+) binding site.

Belongs to the DXR family. Requires Mg(2+) as cofactor. Mn(2+) is required as a cofactor.

It carries out the reaction 2-C-methyl-D-erythritol 4-phosphate + NADP(+) = 1-deoxy-D-xylulose 5-phosphate + NADPH + H(+). It functions in the pathway isoprenoid biosynthesis; isopentenyl diphosphate biosynthesis via DXP pathway; isopentenyl diphosphate from 1-deoxy-D-xylulose 5-phosphate: step 1/6. Functionally, catalyzes the NADPH-dependent rearrangement and reduction of 1-deoxy-D-xylulose-5-phosphate (DXP) to 2-C-methyl-D-erythritol 4-phosphate (MEP). In Pseudomonas putida (strain ATCC 47054 / DSM 6125 / CFBP 8728 / NCIMB 11950 / KT2440), this protein is 1-deoxy-D-xylulose 5-phosphate reductoisomerase.